Consider the following 566-residue polypeptide: Transcription factor tasR (566 aa).

Over residues 1–30 (MISASRMEESASSSSLSDAAAPPPGAALQS) the composition is skewed to low complexity. The tract at residues 1-31 (MISASRMEESASSSSLSDAAAPPPGAALQSI) is disordered. The zn(2)-C6 fungal-type DNA-binding region spans 35-68 (CDRCRFHKLKCNVPAAGHGGPVPCERCTRAKVPC). Disordered regions lie at residues 72–174 (RRRR…PGQH), 346–382 (EFIV…GGDD), 422–453 (SESD…TGTA), and 500–551 (RGVG…GLGG). Low complexity-rich tracts occupy residues 89–108 (PTRR…TSAA) and 359–378 (SESS…NNEA). The span at 501–532 (GVGGGGGGGGGGGGGGGGGVGGGGGGGGGPGG) shows a compositional bias: gly residues.

The protein localises to the nucleus. Transcription factor that regulates the expression of the gene cluster that mediates the biosynthesis of the tetramic acids Sch210971 and Sch210972, potential anti-HIV fungal natural product that contain a decalin core. The polypeptide is Transcription factor tasR (Hapsidospora irregularis).